Here is a 718-residue protein sequence, read N- to C-terminus: MRSLSGKMHEVIICEKPKSSEKIAGALFPDAMKKKHGKVSYWEHVEGDKRVTIVSAVGHLYSLRPRQSNEEHFFDLEWAPIHEIDKKKGYVKDYLNVIRKFAAGADRYIHACDYDIEGTLIGFNALKYGCGEEALRKTSRMKFSTLTREEIQRAYKNPIEVDYGQVDSGAARHILDFIFGVNISRSLMKSVKAATNRFIKLSAGRVQTPTLAILVEREKEIRDFKPVPYWIIRAELGEGIIAESKRGKIFKRELVDSILEKCQGSDAEVKDVRVRDTIRKPPVPFDLGTLQSEAYRVFGFSPKKTQTIAQNLYTEGYTSYPRTSSQKLPESIGYEKILKNLAKNPRFGVHIERLRGPLKPHEGKKEDDAHPAIHPTGLLPSELSKDEKKVYDLIVHRFISVFGEDAILQTMKVELEIGEEEFSFSRKRVSKAGWMESYPYTKMEDEEFPEISGGDSLAVRSVSADERETKPPARYNEASLIRELERRGLGTKSTRADIIAKLYDRKYIEGKKIRVSPLGENIIDTLTRYCEKIISEELTRQFERELEDIMRGKISKDRVIDEAITEVRSILSDIEENLRDIGKELYRAYQDSRVVGECPACGGKLVIKYSPRNRSTFVGCSSYPDCRTVYSLPRGASVLKSLCEKCGLPMISYGRPRQRACLDPKCGKKKSEVEEVVGKCPECGSDLIKRSGRYGEFVGCKGFPKCRFTCSVDEVPEG.

The Toprim domain occupies 9–151; that stretch reads HEVIICEKPK…KFSTLTREEI (143 aa). Glu-15 and Asp-113 together coordinate Mg(2+). The 410-residue stretch at 162–571 folds into the Topo IA-type catalytic domain; it reads DYGQVDSGAA…EAITEVRSIL (410 aa). Positions 202–207 are interaction with DNA; that stretch reads SAGRVQ. Catalysis depends on Tyr-320, which acts as the O-(5'-phospho-DNA)-tyrosine intermediate. The segment covering 361 to 371 has biased composition (basic and acidic residues); sequence HEGKKEDDAHP. The disordered stretch occupies residues 361–380; it reads HEGKKEDDAHPAIHPTGLLP. C4-type zinc fingers lie at residues 598–626 and 680–706; these read CPACGGKLVIKYSPRNRSTFVGCSSYPDC and CPECGSDLIKRSGRYGEFVGCKGFPKC.

This sequence belongs to the type IA topoisomerase family. Monomer. It depends on Mg(2+) as a cofactor.

It carries out the reaction ATP-independent breakage of single-stranded DNA, followed by passage and rejoining.. Functionally, releases the supercoiling and torsional tension of DNA, which is introduced during the DNA replication and transcription, by transiently cleaving and rejoining one strand of the DNA duplex. Introduces a single-strand break via transesterification at a target site in duplex DNA. The scissile phosphodiester is attacked by the catalytic tyrosine of the enzyme, resulting in the formation of a DNA-(5'-phosphotyrosyl)-enzyme intermediate and the expulsion of a 3'-OH DNA strand. The free DNA strand then undergoes passage around the unbroken strand, thus removing DNA supercoils. Finally, in the religation step, the DNA 3'-OH attacks the covalent intermediate to expel the active-site tyrosine and restore the DNA phosphodiester backbone. In Methanothermobacter thermautotrophicus (strain ATCC 29096 / DSM 1053 / JCM 10044 / NBRC 100330 / Delta H) (Methanobacterium thermoautotrophicum), this protein is DNA topoisomerase 1.